A 364-amino-acid polypeptide reads, in one-letter code: Variable large protein 21 (364 aa).

The signal sequence occupies residues Met1 to Gly26. The N-palmitoyl cysteine moiety is linked to residue Cys27. Cys27 carries S-diacylglycerol cysteine lipidation.

The protein belongs to the variable large protein (Vlp) family. Alpha subfamily.

It is found in the cell outer membrane. Its function is as follows. The Vlp and Vsp proteins are antigenically distinct proteins, only one vlp or vsp gene is transcriptionally active at any one time. Switching between these genes is a mechanism of host immune response evasion. The protein is Variable large protein 21 of Borrelia hermsii.